The following is a 361-amino-acid chain: Molybdenum import ATP-binding protein ModC (361 aa).

Positions 1-228 (MLNINIEKQL…EQMRPWVPLQ (228 aa)) constitute an ABC transporter domain. An ATP-binding site is contributed by 31-38 (GRSGAGKT). In terms of domain architecture, Mop spans 289–356 (GSSVRNLLRG…IKGVTMTQMD (68 aa)).

It belongs to the ABC transporter superfamily. Molybdate importer (TC 3.A.1.8) family. The complex is composed of two ATP-binding proteins (ModC), two transmembrane proteins (ModB) and a solute-binding protein (ModA).

Its subcellular location is the cell inner membrane. It catalyses the reaction molybdate(out) + ATP + H2O = molybdate(in) + ADP + phosphate + H(+). Its function is as follows. Part of the ABC transporter complex ModABC involved in molybdenum import. Responsible for energy coupling to the transport system. This chain is Molybdenum import ATP-binding protein ModC, found in Shewanella sp. (strain MR-7).